The sequence spans 505 residues: MRGGTVQINWHEQQPVLTLDFHPVSRRLATGGSDHDIKIWVIASDDSDKKLPTATYHSSLSSHSSAVNVLRFSPSGENLASGADGGGIIIWKLHSTDDGEAWKVQKTLLFHHKDVLDLQWSQDGAFLVSASVDNSCIVWDAIKGSVQQKLEGHLHYVQGVAWDPLGQYIASLSSDRTCRIYANKPQGKSKNTDRMNFVCQHTLVKAEHQNHDESKPPVRAHLFHDETLPSFFRRLAWSPDGSFLVLPAGLCKYSSEVINTAYVMSRRDLSRPAIQLPGASKAIVAVRFCPVLFKLRGSQSDCFFKLPYRVIFAVATLNSLYVYDTESVAPILIHAGLHYAAITDIAWSSDAKYLAVSSRDCFCTIIEFENEELGLPYNLSGTKELDEGNTNCENMKPLKVDSMEIDAGSSKAKIKASSAAVEVTPSPPVLAQNNILMTKDVAEGNATSENDRPSAVDNMEVDVGENKAKMEVTPVAVQVTAPPVSTKNSASSKPTKKRITPIAIN.

WD repeat units lie at residues H11 to K50, S62 to A101, F110 to K149, G152 to N191, F223 to D268, G278 to I333, and L337 to N378. The segment at V479 to N505 is disordered.

The protein belongs to the WD repeat HIR1 family. As to quaternary structure, component of the chromatin assembly factor 1 (CAF-1) complex, composed of FSM (FAS1), FAS2 and MSI1.

The protein localises to the nucleus. In terms of biological role, component of the chromatin assembly factor complex (CAF-1) involved in chromatin assembly following DNA replication and DNA repair. Required for several aspects of development, including apical meristem maintenance by regulating the durations of the S- and G2-phases of the cell cycle through its chromatin assembly activity. This Oryza sativa subsp. japonica (Rice) protein is Chromatin assembly factor 1 subunit FAS2 homolog (FAS2).